Consider the following 213-residue polypeptide: Mediator of RNA polymerase II transcription subunit 7 (213 aa).

The tract at residues Thr-96–Glu-120 is disordered. A compositionally biased stretch (polar residues) spans Glu-97–Glu-120.

Belongs to the Mediator complex subunit 7 family. As to quaternary structure, component of the Mediator complex.

It localises to the nucleus. Component of the Mediator complex, a coactivator involved in the regulated transcription of nearly all RNA polymerase II-dependent genes. Mediator functions as a bridge to convey information from gene-specific regulatory proteins to the basal RNA polymerase II transcription machinery. Mediator is recruited to promoters by direct interactions with regulatory proteins and serves as a scaffold for the assembly of a functional preinitiation complex with RNA polymerase II and the general transcription factors. This Kluyveromyces lactis (strain ATCC 8585 / CBS 2359 / DSM 70799 / NBRC 1267 / NRRL Y-1140 / WM37) (Yeast) protein is Mediator of RNA polymerase II transcription subunit 7 (MED7).